Here is a 262-residue protein sequence, read N- to C-terminus: Ribosome maturation factor RimP (262 aa).

The tract at residues Arg-197–Asp-262 is disordered. Over residues Lys-223–Lys-233 the composition is skewed to basic residues. The span at Thr-240–Gly-254 shows a compositional bias: basic and acidic residues.

It belongs to the RimP family.

Its subcellular location is the cytoplasm. Its function is as follows. Required for maturation of 30S ribosomal subunits. This is Ribosome maturation factor RimP from Rhodopseudomonas palustris (strain BisB18).